The sequence spans 280 residues: Ribose-phosphate pyrophosphokinase (280 aa).

Residues 32–34 (DGE) and 89–90 (RQ) contribute to the ATP site. 2 residues coordinate Mg(2+): His-122 and Asp-160. The active site involves Lys-183. Residues Arg-185, Asp-209, and 213–217 (STGGT) each bind D-ribose 5-phosphate.

The protein belongs to the ribose-phosphate pyrophosphokinase family. Class III (archaeal) subfamily. It depends on Mg(2+) as a cofactor.

The protein localises to the cytoplasm. It catalyses the reaction D-ribose 5-phosphate + ATP = 5-phospho-alpha-D-ribose 1-diphosphate + AMP + H(+). It participates in metabolic intermediate biosynthesis; 5-phospho-alpha-D-ribose 1-diphosphate biosynthesis; 5-phospho-alpha-D-ribose 1-diphosphate from D-ribose 5-phosphate (route I): step 1/1. With respect to regulation, activated by Co(2+) and Ni(2+) ions, however Mg(2+) ion shows almost no significant effect on the activity. Equally inhibited by ADP, CTP and GTP, while dTTP and UTP are less inhibitory. Functionally, involved in the biosynthesis of the central metabolite phospho-alpha-D-ribosyl-1-pyrophosphate (PRPP) via the transfer of pyrophosphoryl group from ATP to 1-hydroxyl of ribose-5-phosphate (Rib-5-P). It can also use CTP and GTP as substrates in addition to ATP. This chain is Ribose-phosphate pyrophosphokinase, found in Thermococcus kodakarensis (strain ATCC BAA-918 / JCM 12380 / KOD1) (Pyrococcus kodakaraensis (strain KOD1)).